Consider the following 593-residue polypeptide: Capsid protein 1 (593 aa).

It belongs to the NCLDV major capsid protein family.

Its subcellular location is the virion. In Acanthamoeba polyphaga mimivirus (APMV), this protein is Capsid protein 1.